The chain runs to 119 residues: Small ribosomal subunit protein eS25 (119 aa).

The segment at 1–42 is disordered; sequence MPPKKDTKASAKQPQKTQKKKEGSGGGKAKKKKWSKGKVRDK. Over residues 28–37 the composition is skewed to basic residues; sequence KAKKKKWSKG.

The protein belongs to the eukaryotic ribosomal protein eS25 family.

This chain is Small ribosomal subunit protein eS25 (RpS25), found in Spodoptera frugiperda (Fall armyworm).